We begin with the raw amino-acid sequence, 4555 residues long: Protocadherin Fat 3 (4555 aa).

An N-terminal signal peptide occupies residues 1 to 31 (MGVTMRHCIDTRPPSCLIFLLLKLCATVSQG). Over 32–4153 (LPGTGPLGFH…AGHSYVGKEE (4122 aa)) the chain is Extracellular. Cadherin domains follow at residues 43–157 (THAL…RPLF), 158–265 (SPTT…APII), 263–374 (PIIH…TPIK), 376–471 (EKDV…TPEF), 472–577 (QETL…SPLF), 578–680 (EKVA…SKSF), 726–830 (KSFP…SPVF), 831–935 (LQDS…SPAF), 936–1042 (IPSS…TPYF), 1043–1147 (PDFA…APLT), 1148–1253 (SEPI…KPQF), 1254–1358 (PEKV…SPIP), 1362–1459 (DEPF…GPEF), 1460–1565 (SQPH…SPYF), 1566–1768 (TNPL…PPVF), 1769–1882 (LFSQ…PPVF), 1883–1985 (TQAV…TQSF), 1982–2083 (TQSF…SPVF), 2084–2185 (VGLP…MPVF), 2186–2286 (DKPF…PPVF), 2287–2393 (DQPT…PPVF), 2394–2495 (NQLI…SPAF), 2496–2599 (SQST…APQF), 2600–2707 (MTLE…LPSF), 2708–2813 (TQSQ…KPVF), 2814–2923 (ETSS…APVF), 2924–3028 (AHEV…SPVC), 3029–3130 (DQVA…PPVF), 3131–3235 (SSNH…PPVF), 3236–3340 (ERRD…PPRF), 3341–3445 (SQDV…SPVF), 3446–3550 (TPAN…KPTA), and 3551–3652 (IPLE…TIRF). Asparagine 48 carries an N-linked (GlcNAc...) asparagine glycan. A glycan (N-linked (GlcNAc...) asparagine) is linked at asparagine 341. 7 N-linked (GlcNAc...) asparagine glycosylation sites follow: asparagine 481, asparagine 562, asparagine 667, asparagine 799, asparagine 879, asparagine 898, and asparagine 1006. N-linked (GlcNAc...) asparagine glycans are attached at residues asparagine 1367 and asparagine 1429. Asparagine 1751 carries an N-linked (GlcNAc...) asparagine glycan. Residues asparagine 1944, asparagine 1993, and asparagine 1996 are each glycosylated (N-linked (GlcNAc...) asparagine). N-linked (GlcNAc...) asparagine glycosylation is found at asparagine 2208, asparagine 2292, asparagine 2331, and asparagine 2467. Asparagine 2734 is a glycosylation site (N-linked (GlcNAc...) asparagine). N-linked (GlcNAc...) asparagine glycosylation is present at asparagine 3000. An N-linked (GlcNAc...) asparagine glycan is attached at asparagine 3201. Residues asparagine 3449, asparagine 3618, and asparagine 3741 are each glycosylated (N-linked (GlcNAc...) asparagine). The 39-residue stretch at 3794 to 3832 (SNDPCVEKPCPEDMQCVGYEASRRPFLCQCPPGKLGECS) folds into the EGF-like 1 domain. Cystine bridges form between cysteine 3798–cysteine 3809, cysteine 3803–cysteine 3821, and cysteine 3823–cysteine 3831. Positions 3834–4017 (HTSLSFAGNS…VGLTELKLGC (184 aa)) constitute a Laminin G-like domain. Asparagine 3926 carries N-linked (GlcNAc...) asparagine glycosylation. Cystine bridges form between cysteine 3984–cysteine 4017, cysteine 4024–cysteine 4035, cysteine 4029–cysteine 4045, cysteine 4047–cysteine 4056, cysteine 4063–cysteine 4074, cysteine 4068–cysteine 4083, cysteine 4085–cysteine 4094, cysteine 4101–cysteine 4112, cysteine 4106–cysteine 4121, and cysteine 4123–cysteine 4132. EGF-like domains are found at residues 4020–4057 (YPDA…TNCE) and 4059–4095 (EITA…VTCE). The 37-residue stretch at 4097-4133 (DVDECEREECENGGSCVNLFGSFFCNCTPGYVGQYCG) folds into the EGF-like 4; calcium-binding domain. The helical transmembrane segment at 4154-4174 (LIGIAVVLFVIFTLIVLFIVF) threads the bilayer. Over 4175 to 4555 (RKKVFRKNYS…FVETQHQTQV (381 aa)) the chain is Cytoplasmic. Over residues 4326–4343 (SNKGSNSEVQSLNSFQSD) the composition is skewed to polar residues. Disordered stretches follow at residues 4326-4347 (SNKG…SGDD), 4395-4424 (GGYD…LPED), and 4452-4472 (PRFH…TDLG). Residues arginine 4508 and arginine 4518 each carry the omega-N-methylarginine modification.

In terms of tissue distribution, restricted to the nervous system. Abundantly expressed in the fetal brain.

Its subcellular location is the membrane. Functionally, may play a role in the interactions between neurites derived from specific subsets of neurons during development. In Rattus norvegicus (Rat), this protein is Protocadherin Fat 3 (Fat3).